A 77-amino-acid polypeptide reads, in one-letter code: MKEQKLIHEGLITESLPNGMFRVRLDNEDLILGYISGRIRRSFIRILPGDRVKIEMSRYDSTRGRIIYRLRKKDSND.

Residues 1–71 form the S1-like domain; the sequence is MKEQKLIHEG…TRGRIIYRLR (71 aa).

The protein belongs to the IF-1 family. In terms of assembly, component of the 30S ribosomal translation pre-initiation complex which assembles on the 30S ribosome in the order IF-2 and IF-3, IF-1 and N-formylmethionyl-tRNA(fMet); mRNA recruitment can occur at any time during PIC assembly.

The protein resides in the plastid. Its subcellular location is the chloroplast. Functionally, one of the essential components for the initiation of protein synthesis. Stabilizes the binding of IF-2 and IF-3 on the 30S subunit to which N-formylmethionyl-tRNA(fMet) subsequently binds. Helps modulate mRNA selection, yielding the 30S pre-initiation complex (PIC). Upon addition of the 50S ribosomal subunit IF-1, IF-2 and IF-3 are released leaving the mature 70S translation initiation complex. In Phalaenopsis aphrodite subsp. formosana (Moth orchid), this protein is Translation initiation factor IF-1, chloroplastic.